The chain runs to 707 residues: UvrABC system protein C (707 aa).

Residues 14 to 94 (AEPGCYLMKD…IKKHRPRFNV (81 aa)) form the GIY-YIG domain. One can recognise a UVR domain in the interval 206 to 241 (GELVERLRGRMAGAAEGLRFEEAARLRDQLQAVERS). The segment at 654–684 (PDAPPAAADEPSGAPEGTPAGGPAEAIPDAA) is disordered. Residues 658–684 (PAAADEPSGAPEGTPAGGPAEAIPDAA) are compositionally biased toward low complexity.

It belongs to the UvrC family. In terms of assembly, interacts with UvrB in an incision complex.

The protein resides in the cytoplasm. Its function is as follows. The UvrABC repair system catalyzes the recognition and processing of DNA lesions. UvrC both incises the 5' and 3' sides of the lesion. The N-terminal half is responsible for the 3' incision and the C-terminal half is responsible for the 5' incision. The sequence is that of UvrABC system protein C from Anaeromyxobacter dehalogenans (strain 2CP-C).